A 493-amino-acid chain; its full sequence is MEKKLKSWQGWLLFCGAMAVVFVLGLVVSSLMERRAETVSVFNNKRVEITGIEARNEVFGENYPRQYETWKETAKTDFKSEFNGNEAVDVLEQRPEMVVLWAGYAFSKDYSTPRGHMHAIEDITHSLRTGAPMDDKSGPQPSTCWTCKSPDVPRMMEAIGVDSFYNNKWGAFGSEIVNPIGCADCHEPTNMKLHISRPALREAFARQGKDIDKATPQEMRSLVCAQCHVEYYFKGDGKYLTFPWDKGFSVEDMEAYYDEADFADYTHALSKARILKAQHPDYEISQMGIHAQRGVSCADCHMPYKSEGGMKFSDHHIQSPLAMIDRTCQVCHRESEETLRNNVYDRQRKANEIRGRLEQELAKAHIEAKFAWDKGATDVQMAEALKLIRQAQWRWDFGVASHGGAFHAPQEIQRILGHGLDKALQARLAISKVLAQHGYTADVPMPDISTKEKAQEYIGLDMEKERKAKDKFLKTIVPEWLEKARANGRLAKL.

The signal sequence occupies residues 1-25; sequence MEKKLKSWQGWLLFCGAMAVVFVLG. A heme c-binding site is contributed by H116. The heme site is built by C144, C147, and K148. The heme c site is built by C182, C185, H186, C224, C227, and H228. Ca(2+)-binding residues include E230, Y231, K276, and Q278. Y231 is a substrate binding site. Substrate is bound at residue H279. Heme c-binding residues include H290, C297, C300, H301, H315, C328, C331, H332, and H407.

This sequence belongs to the cytochrome c-552 family. It depends on Ca(2+) as a cofactor. Heme c serves as cofactor.

The protein resides in the periplasm. The enzyme catalyses 6 Fe(III)-[cytochrome c] + NH4(+) + 2 H2O = 6 Fe(II)-[cytochrome c] + nitrite + 8 H(+). Its pathway is nitrogen metabolism; nitrate reduction (assimilation). Functionally, catalyzes the reduction of nitrite to ammonia, consuming six electrons in the process. The protein is Cytochrome c-552 of Bacteroides fragilis (strain ATCC 25285 / DSM 2151 / CCUG 4856 / JCM 11019 / LMG 10263 / NCTC 9343 / Onslow / VPI 2553 / EN-2).